The chain runs to 148 residues: Deoxyuridine 5'-triphosphate nucleotidohydrolase (148 aa).

Residues 67–69 (RSG), Asn80, 84–86 (LID), and Met94 each bind substrate.

This sequence belongs to the dUTPase family. It depends on Mg(2+) as a cofactor.

It carries out the reaction dUTP + H2O = dUMP + diphosphate + H(+). It functions in the pathway pyrimidine metabolism; dUMP biosynthesis; dUMP from dCTP (dUTP route): step 2/2. In terms of biological role, this enzyme is involved in nucleotide metabolism: it produces dUMP, the immediate precursor of thymidine nucleotides and it decreases the intracellular concentration of dUTP so that uracil cannot be incorporated into DNA. In Burkholderia multivorans (strain ATCC 17616 / 249), this protein is Deoxyuridine 5'-triphosphate nucleotidohydrolase.